We begin with the raw amino-acid sequence, 181 residues long: ADP-ribosylation factor 1 (181 aa).

The N-myristoyl glycine moiety is linked to residue Gly2. GTP contacts are provided by residues 24 to 31 (GLDAAGKT), 67 to 71 (DVGGQ), and 126 to 129 (NKQD).

It belongs to the small GTPase superfamily. Arf family.

It localises to the golgi apparatus. The catalysed reaction is GTP + H2O = GDP + phosphate + H(+). GTP-binding protein involved in protein trafficking; may modulate vesicle budding and uncoating within the Golgi apparatus. This chain is ADP-ribosylation factor 1 (ARF1), found in Chlamydomonas reinhardtii (Chlamydomonas smithii).